The sequence spans 156 residues: Ribosome maturation factor RimP (156 aa).

This sequence belongs to the RimP family.

The protein resides in the cytoplasm. Its function is as follows. Required for maturation of 30S ribosomal subunits. This Bacillus cereus (strain B4264) protein is Ribosome maturation factor RimP.